A 153-amino-acid chain; its full sequence is Xanthine-guanine phosphoribosyltransferase (153 aa).

Residues 37-38 (RG) and 89-97 (DDLVDTGNT) contribute to the 5-phospho-alpha-D-ribose 1-diphosphate site. Position 90 (aspartate 90) interacts with Mg(2+). Guanine-binding residues include aspartate 93 and isoleucine 136. Aspartate 93 and isoleucine 136 together coordinate xanthine. Residues 93–97 (DTGNT) and 135–136 (WI) contribute to the GMP site.

It belongs to the purine/pyrimidine phosphoribosyltransferase family. XGPT subfamily. Homotetramer. The cofactor is Mg(2+).

It is found in the cell inner membrane. It carries out the reaction GMP + diphosphate = guanine + 5-phospho-alpha-D-ribose 1-diphosphate. The enzyme catalyses XMP + diphosphate = xanthine + 5-phospho-alpha-D-ribose 1-diphosphate. It catalyses the reaction IMP + diphosphate = hypoxanthine + 5-phospho-alpha-D-ribose 1-diphosphate. It functions in the pathway purine metabolism; GMP biosynthesis via salvage pathway; GMP from guanine: step 1/1. It participates in purine metabolism; XMP biosynthesis via salvage pathway; XMP from xanthine: step 1/1. In terms of biological role, purine salvage pathway enzyme that catalyzes the transfer of the ribosyl-5-phosphate group from 5-phospho-alpha-D-ribose 1-diphosphate (PRPP) to the N9 position of the 6-oxopurines guanine and xanthine to form the corresponding ribonucleotides GMP (guanosine 5'-monophosphate) and XMP (xanthosine 5'-monophosphate), with the release of PPi. To a lesser extent, also acts on hypoxanthine. This is Xanthine-guanine phosphoribosyltransferase from Pasteurella multocida (strain Pm70).